The chain runs to 218 residues: Thiopurine S-methyltransferase (218 aa).

4 residues coordinate S-adenosyl-L-methionine: Trp-10, Leu-45, Glu-66, and Arg-123.

Belongs to the class I-like SAM-binding methyltransferase superfamily. TPMT family.

The protein localises to the cytoplasm. The enzyme catalyses S-adenosyl-L-methionine + a thiopurine = S-adenosyl-L-homocysteine + a thiopurine S-methylether.. This chain is Thiopurine S-methyltransferase, found in Shewanella baltica (strain OS185).